The following is a 178-amino-acid chain: FXYD domain-containing ion transport regulator 5 (178 aa).

The first 21 residues, 1 to 21 (MSLSSRLCLLTIVALILPSRG), serve as a signal peptide directing secretion. Positions 21–59 (GQTPKKPTSIFTADQTSATTRDNVPDPDQTSPGVQTTPL) are enriched in polar residues. Residues 21 to 130 (GQTPKKPTSI…SYIEHPLDSN (110 aa)) form a disordered region. Topologically, residues 22–145 (QTPKKPTSIF…YYDDTTLRKR (124 aa)) are extracellular. A compositionally biased stretch (low complexity) spans 67-79 (TGSQTAAQTETQQ). The segment covering 80-100 (LTKMATSNPVSDPGPHTSSKK) has biased composition (polar residues). Residues 146 to 166 (GLLVAAVLFITGIIILTSGKC) traverse the membrane as a helical segment. Residues 167 to 178 (RQLSQFCLNRHR) are Cytoplasmic-facing.

Belongs to the FXYD family. Regulatory subunit of the sodium/potassium-transporting ATPase which is composed of a catalytic alpha subunit, a non-catalytic beta subunit and an additional regulatory subunit. The regulatory subunit, a member of the FXYD protein family, modulates the enzymatic activity in a tissue- and isoform-specific way by changing affinities of the Na+/K+-ATPase toward Na(+), K(+) or ATP. Post-translationally, glycosylated. Expressed mainly in epithelial tissue, such as lung, intestine and kidney. Not detected in brain, liver, muscle, and heart.

The protein localises to the cell membrane. Its subcellular location is the basolateral cell membrane. In terms of biological role, associates with and regulates the activity of the sodium/potassium-transporting ATPase (NKA) which catalyzes the hydrolysis of ATP coupled with the exchange of Na(+) and K(+) ions across the plasma membrane. May increase NKA activity by increasing the apparent affinity for Na(+). Involved in down-regulation of E-cadherin which results in reduced cell adhesion. Promotes metastasis. This is FXYD domain-containing ion transport regulator 5 (Fxyd5) from Mus musculus (Mouse).